Reading from the N-terminus, the 218-residue chain is Thiopurine S-methyltransferase (218 aa).

Positions 10, 45, 66, and 123 each coordinate S-adenosyl-L-methionine.

It belongs to the class I-like SAM-binding methyltransferase superfamily. TPMT family.

It localises to the cytoplasm. It catalyses the reaction S-adenosyl-L-methionine + a thiopurine = S-adenosyl-L-homocysteine + a thiopurine S-methylether.. The polypeptide is Thiopurine S-methyltransferase (Xanthomonas euvesicatoria pv. vesicatoria (strain 85-10) (Xanthomonas campestris pv. vesicatoria)).